Reading from the N-terminus, the 374-residue chain is Pectate lyase 3 (374 aa).

An N-terminal signal peptide occupies residues 1 to 22 (MKYLLPSTAAGLLLLAAQPTMA). An intrachain disulfide couples Cys93 to Cys176. 4 residues coordinate Ca(2+): Asp150, Asp152, Glu187, and Asp191. Arg239 is an active-site residue. A disulfide bridge connects residues Cys350 and Cys373.

This sequence belongs to the polysaccharide lyase 1 family. PLADES subfamily. The cofactor is Ca(2+).

The protein localises to the secreted. It carries out the reaction Eliminative cleavage of (1-&gt;4)-alpha-D-galacturonan to give oligosaccharides with 4-deoxy-alpha-D-galact-4-enuronosyl groups at their non-reducing ends.. Its pathway is glycan metabolism; pectin degradation; 2-dehydro-3-deoxy-D-gluconate from pectin: step 2/5. In terms of biological role, involved in maceration and soft-rotting of plant tissue. This Pectobacterium atrosepticum (strain SCRI 1043 / ATCC BAA-672) (Erwinia carotovora subsp. atroseptica) protein is Pectate lyase 3 (pel3).